Reading from the N-terminus, the 1300-residue chain is Sal-like protein 3 (1300 aa).

Residues 1–11 (MSRRKQAKPQH) show a composition bias toward basic residues. Disordered regions lie at residues 1–51 (MSRR…EETS), 84–162 (EDAP…YGAP), 234–258 (QRPPPRPSLSPAAAPSAPGPAPSQL), and 277–352 (GSGP…GSLL). The C2H2-type 1; atypical zinc-finger motif lies at 51–73 (SVCEKCCAEFFKWADFLEHQRSC). Pro residues predominate over residues 87-100 (PAPPPEDFPEPSPA). S109 carries the post-translational modification Phosphoserine. Basic and acidic residues predominate over residues 122–132 (GEARPVEKEAE). Over residues 145-157 (PRPPPAAPAPPTP) the composition is skewed to pro residues. 2 stretches are compositionally biased toward low complexity: residues 277–319 (GSGP…AAPA) and 329–352 (PQSAASSQPQSASTPPALAPGSLL). C2H2-type zinc fingers lie at residues 420-442 (HKCRFCAKVFGSDSALQIHLRSH) and 448-470 (FKCNICGNRFSTKGNLKVHFQRH). The segment at 523-633 (PTSVGLQLPP…VDGAPTSLGS (111 aa)) is disordered. Positions 543–561 (SPSATPASRSPQRPSPASS) are enriched in low complexity. Residues 577 to 586 (VSATAESPQS) show a composition bias toward polar residues. 3 C2H2-type zinc fingers span residues 679–701 (NQCVICHRVLSCQSALKMHYRTH), 707–729 (FKCKICGRAFTTKGNLKTHFGVH), and 739–761 (HSCPICQKKFTNAVVLQQHIRMH). A disordered region spans residues 864–955 (SVENGSGESD…GSGGAPGRAG (92 aa)). The span at 889–910 (RSAGSPALSESSSSQALSPAPS) shows a compositional bias: low complexity. S919 carries the post-translational modification Phosphoserine. 4 C2H2-type zinc fingers span residues 977–999 (TVCGVCGKPFACKSALEIHYRSH), 1005–1027 (FVCALCRRGCSTMGNLKQHLLTH), 1113–1135 (HNCQSCGKTFSSASALQIHERTH), and 1141–1163 (FGCTICGRAFTTKGNLKVHMGTH). Phosphoserine is present on S1177. The tract at residues 1259–1279 (GMDKARTGSSPPIVSLDKASS) is disordered.

This sequence belongs to the sal C2H2-type zinc-finger protein family. Widely expressed in adult with highest levels in heart. Expressed in fetal brain (in neurons of hippocampus, cortex, mediodorsal and ventrolateral thalamic nuclei, putamen, cerebellum and brainstem).

The protein resides in the nucleus. Its function is as follows. Probable transcription factor. The sequence is that of Sal-like protein 3 (SALL3) from Homo sapiens (Human).